A 305-amino-acid chain; its full sequence is Myb-like transcriptional regulator basR (305 aa).

Myb-like domains lie at Arg5–Phe59, Thr60–Leu110, and Asn111–Ser162. Residues Pro175–Ser215 form a disordered region. Residues Gln198 to Ser207 are compositionally biased toward polar residues.

It is found in the nucleus. Its function is as follows. Transcription regulator that acts as a central regulatory node for the integration of external bacterial signals leading to the regulation of secondary metabolite gene clusters such as orsellinic, lecanoric acid, cichorine, 2,4-dihydroxy-3-methyl-6-(2-oxopropyl)benzaldehyde (dba), emericellamide or microperfuranone clusters. This chain is Myb-like transcriptional regulator basR, found in Emericella nidulans (strain FGSC A4 / ATCC 38163 / CBS 112.46 / NRRL 194 / M139) (Aspergillus nidulans).